Reading from the N-terminus, the 916-residue chain is Nitrate reductase [NADH] 1 (916 aa).

Positions 1–77 (MAASVQPRQF…DDEEEEQEDW (77 aa)) are disordered. Acidic residues predominate over residues 66 to 76 (GSDDEEEEQED). Mo-molybdopterin is bound at residue C192. Residues 541 to 616 (GKQFTMSEVR…LDTYRIGELI (76 aa)) enclose the Cytochrome b5 heme-binding domain. Residues H576 and H599 each contribute to the heme site. The FAD-binding FR-type domain occupies 656 to 768 (RDKVPCQLVD…KGPLGHVEYT (113 aa)). FAD contacts are provided by residues 708 to 711 (RAYT), 725 to 729 (LIKVY), F730, F737, 742 to 744 (LMT), S792, and T795.

Belongs to the nitrate reductase family. Homodimer. The cofactor is FAD. It depends on heme as a cofactor. Mo-molybdopterin serves as cofactor.

The catalysed reaction is nitrite + NAD(+) + H2O = nitrate + NADH + H(+). Functionally, nitrate reductase is a key enzyme involved in the first step of nitrate assimilation in plants, fungi and bacteria. This chain is Nitrate reductase [NADH] 1 (NIA1), found in Oryza sativa subsp. japonica (Rice).